Here is a 153-residue protein sequence, read N- to C-terminus: Membrane protein FAM174B (153 aa).

The first 27 residues, 1–27 (MSALPPQPPPPLLLLLLALLAAPAALA), serve as a signal peptide directing secretion. The Extracellular portion of the chain corresponds to 28–84 (RRAESASASQPEAEHQPPPGPGNATQLGSGMAGGGSSNSSVDAVVTRISSLLRDLPT). The tract at residues 31-67 (ESASASQPEAEHQPPPGPGNATQLGSGMAGGGSSNSS) is disordered. Asn-50 carries N-linked (GlcNAc...) asparagine glycosylation. Residues 85–105 (LKATVIVACAFSALLIACLLL) traverse the membrane as a helical segment. Residues 106-153 (RVFRLGKRLKKTRKYDIITTPAERVEMAPLNEEDDEDEDSTVFDIKYR) lie on the Cytoplasmic side of the membrane.

Belongs to the FAM174 family.

Its subcellular location is the cell membrane. The protein localises to the golgi apparatus. Functionally, essential for Golgi structural integrity. In Mus musculus (Mouse), this protein is Membrane protein FAM174B (Fam174b).